Here is a 354-residue protein sequence, read N- to C-terminus: Probable butyrate kinase (354 aa).

Belongs to the acetokinase family.

The protein resides in the cytoplasm. It catalyses the reaction butanoate + ATP = butanoyl phosphate + ADP. The protein is Probable butyrate kinase of Phocaeicola vulgatus (strain ATCC 8482 / DSM 1447 / JCM 5826 / CCUG 4940 / NBRC 14291 / NCTC 11154) (Bacteroides vulgatus).